The sequence spans 172 residues: SsrA-binding protein (172 aa).

Belongs to the SmpB family.

The protein localises to the cytoplasm. In terms of biological role, required for rescue of stalled ribosomes mediated by trans-translation. Binds to transfer-messenger RNA (tmRNA), required for stable association of tmRNA with ribosomes. tmRNA and SmpB together mimic tRNA shape, replacing the anticodon stem-loop with SmpB. tmRNA is encoded by the ssrA gene; the 2 termini fold to resemble tRNA(Ala) and it encodes a 'tag peptide', a short internal open reading frame. During trans-translation Ala-aminoacylated tmRNA acts like a tRNA, entering the A-site of stalled ribosomes, displacing the stalled mRNA. The ribosome then switches to translate the ORF on the tmRNA; the nascent peptide is terminated with the 'tag peptide' encoded by the tmRNA and targeted for degradation. The ribosome is freed to recommence translation, which seems to be the essential function of trans-translation. The chain is SsrA-binding protein from Dehalococcoides mccartyi (strain ATCC BAA-2266 / KCTC 15142 / 195) (Dehalococcoides ethenogenes (strain 195)).